The primary structure comprises 618 residues: MTASRLLETINSPADLRRLDRKQLPQLASELRAFLIDSVSKTGGHLSSNLGTVELTIALHAVFNTPEDRLVWDVGHQCYAHKVLTGRREGMSTLRMHGGVSGFPKRAESPYDTFGVGHSSTSISAALGMALAAKHKGEDRKAIAIIGDGAMSAGMAFEAMNNAGVADADMLVILNDNEMSISPPVGALNNILTRLTSSKTYNVAREAGRHMLGFAPPLLELARRAEEHVKGMIAPGTLFEEFGFHYYGPIDGHDLDALIPTLENLKKLKGPKFLHVITKKGQGYKLAENDPILYHGVGKFAACDGIQSAKGPAKLTYTQVFGDWLCDMAKADSRLVGITPAMREGSGMVRFSAEHADRYFDVGIAEQHAVTFAAGLACEGLKPVVAIYSTFLQRGYDQLVHDVALQNLPVIFAVDRGGLVGADGPTHHGTFDLSFVTCIPNMTVMAPADEAECRKMLSTAMTIDGPSMVRYPRGSGTGTIPEAKLDTLPVGKGDIRRRGKDIALLAFGSLVAAAVAAGEELDATVANMRFIKPLDADLIVELAGNHSLLVSIEENAVIGGAGSEIERVLAERGLQVPVLRLGLPDRFIDHGEQGQLLAELGLDKEGIVRAVRARTNPQ.

Residues histidine 76 and 117-119 (GHS) contribute to the thiamine diphosphate site. Residue aspartate 148 participates in Mg(2+) binding. Thiamine diphosphate contacts are provided by residues 149–150 (GA), asparagine 177, tyrosine 284, and glutamate 366. Asparagine 177 contributes to the Mg(2+) binding site.

This sequence belongs to the transketolase family. DXPS subfamily. As to quaternary structure, homodimer. It depends on Mg(2+) as a cofactor. The cofactor is thiamine diphosphate.

It carries out the reaction D-glyceraldehyde 3-phosphate + pyruvate + H(+) = 1-deoxy-D-xylulose 5-phosphate + CO2. It participates in metabolic intermediate biosynthesis; 1-deoxy-D-xylulose 5-phosphate biosynthesis; 1-deoxy-D-xylulose 5-phosphate from D-glyceraldehyde 3-phosphate and pyruvate: step 1/1. Its function is as follows. Catalyzes the acyloin condensation reaction between C atoms 2 and 3 of pyruvate and glyceraldehyde 3-phosphate to yield 1-deoxy-D-xylulose-5-phosphate (DXP). This Dechloromonas aromatica (strain RCB) protein is 1-deoxy-D-xylulose-5-phosphate synthase.